The chain runs to 260 residues: Proline-rich protein 33 (260 aa).

The tract at residues 29–132 (GVQTVSPRPE…KVAPKPSRSG (104 aa)) is disordered. Residues 73 to 83 (GPSPYSPPPAA) show a composition bias toward pro residues.

This chain is Proline-rich protein 33 (Prr33), found in Mus musculus (Mouse).